The sequence spans 1401 residues: DNA-directed RNA polymerase subunit beta (1401 aa).

This sequence belongs to the RNA polymerase beta chain family. The RNAP catalytic core consists of 2 alpha, 1 beta, 1 beta' and 1 omega subunit. When a sigma factor is associated with the core the holoenzyme is formed, which can initiate transcription.

The catalysed reaction is RNA(n) + a ribonucleoside 5'-triphosphate = RNA(n+1) + diphosphate. DNA-dependent RNA polymerase catalyzes the transcription of DNA into RNA using the four ribonucleoside triphosphates as substrates. This Zymomonas mobilis subsp. mobilis (strain ATCC 31821 / ZM4 / CP4) protein is DNA-directed RNA polymerase subunit beta.